The sequence spans 211 residues: Ribonuclease MRP protein subunit rmp1 (211 aa).

The helical transmembrane segment at 73–93 (PALGLVLLGILARVWFVMGGI) threads the bilayer. Phosphoserine is present on Ser156. The interval 178–211 (SQGTKRKSKNSNSTVKKKKKRARKGRDEIDDIFG) is disordered. The span at 181-201 (TKRKSKNSNSTVKKKKKRARK) shows a compositional bias: basic residues.

As to quaternary structure, component of RNase MRP complex which consists of an RNA moiety and at least 10 protein subunits.

It localises to the membrane. It is found in the nucleus. The protein localises to the nucleolus. Functions as part of ribonuclease MRP (RNase MRP), which is involved in rRNA processing in mitochondria. This chain is Ribonuclease MRP protein subunit rmp1, found in Schizosaccharomyces pombe (strain 972 / ATCC 24843) (Fission yeast).